A 651-amino-acid polypeptide reads, in one-letter code: Probable potassium transport system protein Kup (651 aa).

Helical transmembrane passes span 41 to 61, 82 to 102, 130 to 150, 163 to 183, 194 to 214, 235 to 255, 276 to 296, 309 to 329, 366 to 386, 395 to 415, 426 to 446, and 450 to 470; these read LVLG…IYAF, VVSF…VLFV, LILG…VITP, IVAP…LVTL, VAIV…ASGL, FLTV…LAMT, WLWI…AFIL, MIPS…TVIA, IYIP…VLGF, AYGI…YIVM, ALPI…ANII, and EGGW…WTWV.

Belongs to the HAK/KUP transporter (TC 2.A.72) family.

It localises to the cell inner membrane. It catalyses the reaction K(+)(in) + H(+)(in) = K(+)(out) + H(+)(out). Its function is as follows. Transport of potassium into the cell. Likely operates as a K(+):H(+) symporter. The sequence is that of Probable potassium transport system protein Kup from Brucella ovis (strain ATCC 25840 / 63/290 / NCTC 10512).